The chain runs to 131 residues: Small ribosomal subunit protein uS8 (131 aa).

This sequence belongs to the universal ribosomal protein uS8 family. Part of the 30S ribosomal subunit. Contacts proteins S5 and S12.

Its function is as follows. One of the primary rRNA binding proteins, it binds directly to 16S rRNA central domain where it helps coordinate assembly of the platform of the 30S subunit. The sequence is that of Small ribosomal subunit protein uS8 from Cupriavidus necator (strain ATCC 17699 / DSM 428 / KCTC 22496 / NCIMB 10442 / H16 / Stanier 337) (Ralstonia eutropha).